Here is a 134-residue protein sequence, read N- to C-terminus: MDTSHTTKSCLLILLVALLCAERAQGLECYQCYGVPFETSCPSITCPYPDGVCVTQEAAVIVDSQTRKVKNNLCLPICPPNIESMEILGTKVNVKTSCCQEDLCNVAVPNGGSTWTMAGVLLFSLSSVLLQTLL.

Positions 1–26 (MDTSHTTKSCLLILLVALLCAERAQG) are cleaved as a signal peptide. The region spanning 27–119 (LECYQCYGVP…NGGSTWTMAG (93 aa)) is the UPAR/Ly6 domain. Intrachain disulfides connect Cys-29/Cys-53, Cys-32/Cys-41, Cys-46/Cys-74, Cys-78/Cys-98, and Cys-99/Cys-104. Gly-112 is lipidated: GPI-anchor amidated glycine. The propeptide at 113 to 134 (STWTMAGVLLFSLSSVLLQTLL) is removed in mature form.

In terms of processing, O-glycosylated. Not N-glycosylated. Post-translationally, not phosphorylated. Widely expressed.

Its subcellular location is the cell membrane. In terms of biological role, T-cell activation. In Mus musculus (Mouse), this protein is Lymphocyte antigen 6A-2/6E-1 (Ly6a).